Consider the following 900-residue polypeptide: DNA mismatch repair protein MutS (900 aa).

Residue 637–644 (GPNMAGKS) coordinates ATP.

It belongs to the DNA mismatch repair MutS family.

In terms of biological role, this protein is involved in the repair of mismatches in DNA. It is possible that it carries out the mismatch recognition step. This protein has a weak ATPase activity. This is DNA mismatch repair protein MutS from Methanosarcina mazei (strain ATCC BAA-159 / DSM 3647 / Goe1 / Go1 / JCM 11833 / OCM 88) (Methanosarcina frisia).